Here is a 247-residue protein sequence, read N- to C-terminus: 3-deoxy-manno-octulosonate cytidylyltransferase (247 aa).

It belongs to the KdsB family.

It is found in the cytoplasm. It carries out the reaction 3-deoxy-alpha-D-manno-oct-2-ulosonate + CTP = CMP-3-deoxy-beta-D-manno-octulosonate + diphosphate. The protein operates within nucleotide-sugar biosynthesis; CMP-3-deoxy-D-manno-octulosonate biosynthesis; CMP-3-deoxy-D-manno-octulosonate from 3-deoxy-D-manno-octulosonate and CTP: step 1/1. It functions in the pathway bacterial outer membrane biogenesis; lipopolysaccharide biosynthesis. In terms of biological role, activates KDO (a required 8-carbon sugar) for incorporation into bacterial lipopolysaccharide in Gram-negative bacteria. The protein is 3-deoxy-manno-octulosonate cytidylyltransferase of Methylobacterium sp. (strain 4-46).